Here is a 347-residue protein sequence, read N- to C-terminus: Protein RecA (347 aa).

Residue 66-73 (GPESSGKT) participates in ATP binding.

This sequence belongs to the RecA family.

It is found in the cytoplasm. Functionally, can catalyze the hydrolysis of ATP in the presence of single-stranded DNA, the ATP-dependent uptake of single-stranded DNA by duplex DNA, and the ATP-dependent hybridization of homologous single-stranded DNAs. It interacts with LexA causing its activation and leading to its autocatalytic cleavage. This is Protein RecA from Methylococcus capsulatus (strain ATCC 33009 / NCIMB 11132 / Bath).